A 257-amino-acid chain; its full sequence is Taurine import ATP-binding protein TauB (257 aa).

An ABC transporter domain is found at 6–233; sequence LDKISIHYDG…RYAAGEPIRA (228 aa). 38–45 lines the ATP pocket; the sequence is GRSGCGKT.

This sequence belongs to the ABC transporter superfamily. Taurine importer (TC 3.A.1.17.1) family. The complex is composed of two ATP-binding proteins (TauB), two transmembrane proteins (TauC) and a solute-binding protein (TauA).

The protein resides in the cell inner membrane. The enzyme catalyses taurine(out) + ATP + H2O = taurine(in) + ADP + phosphate + H(+). Its function is as follows. Part of the ABC transporter complex TauABC involved in taurine import. Responsible for energy coupling to the transport system. The polypeptide is Taurine import ATP-binding protein TauB (Mesorhizobium japonicum (strain LMG 29417 / CECT 9101 / MAFF 303099) (Mesorhizobium loti (strain MAFF 303099))).